The primary structure comprises 500 residues: Lysine--tRNA ligase (500 aa).

Positions 409 and 416 each coordinate Mg(2+).

Belongs to the class-II aminoacyl-tRNA synthetase family. As to quaternary structure, homodimer. It depends on Mg(2+) as a cofactor.

Its subcellular location is the cytoplasm. The catalysed reaction is tRNA(Lys) + L-lysine + ATP = L-lysyl-tRNA(Lys) + AMP + diphosphate. In Lysinibacillus sphaericus (strain C3-41), this protein is Lysine--tRNA ligase.